A 120-amino-acid polypeptide reads, in one-letter code: MFVNKKYTAKGKNLPSSPKKVRPIANNIRGKPYNEAIAILCSMPNKGAKLLGKVVKSAASNAMYHNRNLSEDMIFVKTVMVDDGRKRRSIWPRARGRADRLINRSCHIFVEVYEKMYGGE.

The disordered stretch occupies residues 1–25 (MFVNKKYTAKGKNLPSSPKKVRPIA).

Belongs to the universal ribosomal protein uL22 family. As to quaternary structure, part of the 50S ribosomal subunit.

In terms of biological role, this protein binds specifically to 23S rRNA; its binding is stimulated by other ribosomal proteins, e.g. L4, L17, and L20. It is important during the early stages of 50S assembly. It makes multiple contacts with different domains of the 23S rRNA in the assembled 50S subunit and ribosome. The globular domain of the protein is located near the polypeptide exit tunnel on the outside of the subunit, while an extended beta-hairpin is found that lines the wall of the exit tunnel in the center of the 70S ribosome. This is Large ribosomal subunit protein uL22 from Borrelia recurrentis (strain A1).